A 270-amino-acid polypeptide reads, in one-letter code: A-type potassium channel modulatory protein KCNIP2 (270 aa).

Residues 1 to 17 show a composition bias toward basic and acidic residues; the sequence is MRGQGRKESLSESRDLD. The segment at 1–34 is disordered; the sequence is MRGQGRKESLSESRDLDGSYDQLTGHPPGPSKKA. Serine 9 is modified (phosphoserine). Residues cysteine 45 and cysteine 46 are each lipidated (S-palmitoyl cysteine). An EF-hand 1; degenerate domain is found at 81–137; the sequence is FELSTVCHRPEGLEQLQEQTKFTRRELQVLYRGFKNECPSGIVNEENFKQIYSQFFP. EF-hand domains are found at residues 140-175, 176-211, and 224-259; these read DSSN…ILRG, TIDD…IYDM, and APRE…DENI. The Ca(2+) site is built by aspartate 153, asparagine 155, aspartate 157, serine 159, aspartate 164, aspartate 189, asparagine 191, aspartate 193, cysteine 195, glutamate 200, aspartate 237, asparagine 239, aspartate 241, and glutamate 248. Positions 257–270 are interaction with KCND2; it reads ENIMRSMQLFDNVI.

Belongs to the recoverin family. As to quaternary structure, component of heteromultimeric potassium channels. Identified in potassium channel complexes containing KCND1, KCND2, KCND3, KCNIP1, KCNIP2, KCNIP3, KCNIP4, DPP6 and DPP10. The KCND2-KCNIP2 channel complex contains four KCND2 and four KCNIP2 subunits. Interacts with KCND2. Probably part of a complex consisting of KCNIP1, KCNIP2 isoform 3 and KCND2. At least isoform 2 and isoform 3 can self-associate to form homodimers and homotetramers. Isoform 3 interacts with KCNIP1 in a calcium-dependent manner. Interacts with KCND3; each KCNIP2 monomer interacts with two adjacent KCND3 subunits, through both the N-terminal inactivation ball of a KCND3 subunit and a C-terminal helix from the adjacent KCND3 subunit, clamping them together; this interaction modulates the channel gating kinetics. Palmitoylated. Palmitoylation enhances association with the plasma membrane. Expressed in heart, brain and lung. In brain, abundantly expressed in striatum, hippocampus and olfactory bulb, moderately expressed in cerebral cortex and lowly expressed in thalamus and hypothalamus. Isoform 1 is predominant in cerebral cortex, striatum and hippocampus. Isoform 1, isoform 2 and isoform 3 are equally expressed in olfactory bulb. Iisoform 3 is expressed at high levels and isoform 1 at low levels in heart (in PubMed:11263977).

The protein localises to the cell membrane. Functionally, regulatory subunit of Kv4/D (Shal)-type voltage-gated rapidly inactivating A-type potassium channels. Modulates channel density, inactivation kinetics and rate of recovery from inactivation in a calcium-dependent and isoform-specific manner. Involved in KCND2 and KCND3 trafficking to the cell surface. Essential for the expression of I(To) currents in the heart. Required for normal protein levels of KCND2 in the heart ventricle. This chain is A-type potassium channel modulatory protein KCNIP2, found in Rattus norvegicus (Rat).